The primary structure comprises 242 residues: Guanylate kinase (242 aa).

The Guanylate kinase-like domain maps to 22–200 (GLLIVMTGAS…AVRELQAVQR (179 aa)). 29-36 (GASGVGKG) is an ATP binding site.

This sequence belongs to the guanylate kinase family.

The protein localises to the cytoplasm. It catalyses the reaction GMP + ATP = GDP + ADP. Functionally, essential for recycling GMP and indirectly, cGMP. The protein is Guanylate kinase of Deinococcus geothermalis (strain DSM 11300 / CIP 105573 / AG-3a).